A 735-amino-acid polypeptide reads, in one-letter code: 1,4-alpha-glucan branching enzyme GlgB 1 (735 aa).

Catalysis depends on aspartate 418, which acts as the Nucleophile. Glutamate 471 serves as the catalytic Proton donor.

Belongs to the glycosyl hydrolase 13 family. GlgB subfamily. In terms of assembly, monomer.

It catalyses the reaction Transfers a segment of a (1-&gt;4)-alpha-D-glucan chain to a primary hydroxy group in a similar glucan chain.. It functions in the pathway glycan biosynthesis; glycogen biosynthesis. Its function is as follows. Catalyzes the formation of the alpha-1,6-glucosidic linkages in glycogen by scission of a 1,4-alpha-linked oligosaccharide from growing alpha-1,4-glucan chains and the subsequent attachment of the oligosaccharide to the alpha-1,6 position. The sequence is that of 1,4-alpha-glucan branching enzyme GlgB 1 from Rhizobium etli (strain ATCC 51251 / DSM 11541 / JCM 21823 / NBRC 15573 / CFN 42).